Consider the following 660-residue polypeptide: Phosphatidylinositol-3-phosphate phosphatase MTMR7 (660 aa).

Positions 126-504 constitute a Myotubularin phosphatase domain; it reads GWVLIDLSEE…FMYKFWSGMY (379 aa). A 1,2-diacyl-sn-glycero-3-phospho-(1D-myo-inositol-3-phosphate) is bound by residues Asn-250, Asn-275, and Ile-276. Cys-338 serves as the catalytic Phosphocysteine intermediate. A 1,2-diacyl-sn-glycero-3-phospho-(1D-myo-inositol-3-phosphate)-binding residues include Ser-339, Asp-340, Gly-341, Trp-342, Asp-343, Arg-344, and Arg-384. The stretch at 521–551 forms a coiled coil; that stretch reads LMAVKEETQQLEEELEALEERLEKIQKVQLN. The disordered stretch occupies residues 554–660; that stretch reads KVKSKQSEPS…DSDEAVFLTA (107 aa). Residues 566–596 show a composition bias toward polar residues; that stretch reads SGFSTSDNSIANTPQDYSGNMKSFPSRSPSQ. Thr-578 carries the post-translational modification Phosphothreonine. Basic and acidic residues predominate over residues 641 to 653; that stretch reads APSEDSGKDRDSD.

This sequence belongs to the protein-tyrosine phosphatase family. Non-receptor class myotubularin subfamily. In terms of assembly, heterodimer (via C-terminus) with MTMR9 (via coiled coil domain); the interaction enhances MTMR7 catalytic activity. Does not homodimerize. Interacts with RAB1B (in GDP-bound form). In terms of tissue distribution, expressed specifically in brain.

The protein resides in the cytoplasm. It is found in the endomembrane system. The enzyme catalyses a 1,2-diacyl-sn-glycero-3-phospho-(1D-myo-inositol-3-phosphate) + H2O = a 1,2-diacyl-sn-glycero-3-phospho-(1D-myo-inositol) + phosphate. The catalysed reaction is 1D-myo-inositol 1,3-bisphosphate + H2O = 1D-myo-inositol 1-phosphate + phosphate. With respect to regulation, interaction with MTMR9 increases phosphatase activity. In terms of biological role, lipid phosphatase that specifically dephosphorylates the D-3 position of phosphatidylinositol 3-phosphate (PtdIns(3)P) and inositol 1,3-bisphosphate (Ins(1,3)P2). The sequence is that of Phosphatidylinositol-3-phosphate phosphatase MTMR7 from Homo sapiens (Human).